We begin with the raw amino-acid sequence, 214 residues long: Adenylate kinase (214 aa).

An ATP-binding site is contributed by 10-15 (GAGKGT). The NMP stretch occupies residues 30 to 59 (STGDMLRAAIKAGTELGLKAKAVMDAGQLV). AMP-binding positions include T31, R36, 57 to 59 (QLV), 85 to 88 (GFPR), and Q92. Residues 122–159 (GRRVHSGSGRTYHVVFNPPKVEGKDDVTGEDLVIRADD) are LID. ATP contacts are provided by residues R123 and 132–133 (TY). Positions 156 and 167 each coordinate AMP. Q200 provides a ligand contact to ATP.

It belongs to the adenylate kinase family. In terms of assembly, monomer.

Its subcellular location is the cytoplasm. The enzyme catalyses AMP + ATP = 2 ADP. It functions in the pathway purine metabolism; AMP biosynthesis via salvage pathway; AMP from ADP: step 1/1. Catalyzes the reversible transfer of the terminal phosphate group between ATP and AMP. Plays an important role in cellular energy homeostasis and in adenine nucleotide metabolism. The sequence is that of Adenylate kinase from Aeromonas hydrophila subsp. hydrophila (strain ATCC 7966 / DSM 30187 / BCRC 13018 / CCUG 14551 / JCM 1027 / KCTC 2358 / NCIMB 9240 / NCTC 8049).